A 141-amino-acid polypeptide reads, in one-letter code: Large ribosomal subunit protein uL11 (141 aa).

It belongs to the universal ribosomal protein uL11 family. In terms of assembly, part of the ribosomal stalk of the 50S ribosomal subunit. Interacts with L10 and the large rRNA to form the base of the stalk. L10 forms an elongated spine to which L12 dimers bind in a sequential fashion forming a multimeric L10(L12)X complex. One or more lysine residues are methylated.

Functionally, forms part of the ribosomal stalk which helps the ribosome interact with GTP-bound translation factors. The protein is Large ribosomal subunit protein uL11 of Prochlorococcus marinus (strain MIT 9211).